Consider the following 194-residue polypeptide: MFNQTQLFVFLAVFTTSSVLGNNNDVKDGAASGAHSDRLGLWFGPRLGKRSLRISTEDNRQAFFKLLEAADALKYYYDQLPYEMQADEPETRVTKKVIFTPKLGRSLAYDDKSFENVEFTPRLGRRLSDDMPATPADQEMYRQDPEQIDSRTKYFSPRLGRTMNFSPRLGRELSYDMMPNKIRVVRSTNKTRST.

An N-terminal signal peptide occupies residues 1–23 (MFNQTQLFVFLAVFTTSSVLGNN). At L47 the chain carries Leucine amide. Residues 51 to 94 (SLRISTEDNRQAFFKLLEAADALKYYYDQLPYEMQADEPETRVT) constitute a propeptide that is removed on maturation. Leucine amide is present on residues L103, L123, L159, and L169. Positions 172-194 (ELSYDMMPNKIRVVRSTNKTRST) are excised as a propeptide.

It belongs to the pyrokinin family. As to expression, expressed in the subesophageal ganglions. Not found in corpora cardiaca, corpora allata and thoracic ganglia.

The protein localises to the secreted. A hormone that controls sex pheromone production in females and pheromone responsiveness in male. Also mediates visceral muscle contractile activity (myotropic activity). In Helicoverpa zea (Corn earworm moth), this protein is PBAN-type neuropeptides.